Reading from the N-terminus, the 612-residue chain is MGKVIGIDLGTTFSCVAVMEGGQPVVIPNAEGARTTPSVVAFTKEGERLVGQVAKRQAIVNPDRTIMSIKRHMGSDYKVKIDDKEYTPQEISAMILQKLKADAEAYLGEKVTQAVITVPAYFNDSQRQATKDAGRIAGLEVLRIINEPTAAALAYGLDKEGNQKIMVYDLGGGTFDVSILEIGEGVFEVLATSGNNHLGGDDFDQRIIDWLADNFKKEHGIDLRNDRMALQRLKDAAERAKIELSSATVTNINLPFITADATGPKHIDVNLTRAKFEELISDLVESTVGPVNQALNDAGLKPSDIDKVLLIGGSTRVPLVQETVKKIMGKEPHKGINPDEAVAIGAAIQAAVLSGEVKDILLLDVTPLSLGIETLGGVFTKIIERNTTIPTRKSQIFTTAADNQTSVEIHVLQGERPMAKDNKTLGRFILSGIPPAPRGVPQIEVTFDIDANGIVHVSAKDLGTGKSQDITITSTTNLSEEEIQRMINEAKQYEEQDRKKKEEIEIRNKADSLIYQAEKTMKDLGDKMTQAEKDEINKEIENVRKALEGSDIEAIKSASEKLSQAFYKVSTRIYQQAGGQTGGATNTDSAGQGTTQDNVYEANYKVEDDDNK.

Position 174 is a phosphothreonine; by autocatalysis (Thr-174). Residues 578-612 (GGQTGGATNTDSAGQGTTQDNVYEANYKVEDDDNK) are disordered. Residues 586–598 (NTDSAGQGTTQDN) are compositionally biased toward polar residues.

It belongs to the heat shock protein 70 family.

In terms of biological role, acts as a chaperone. The chain is Chaperone protein DnaK from Thermoanaerobacter sp. (strain X514).